The chain runs to 475 residues: Ribulose bisphosphate carboxylase large chain (475 aa).

A propeptide spanning residues 1-2 (MS) is cleaved from the precursor. The residue at position 3 (proline 3) is an N-acetylproline. Position 14 is an N6,N6,N6-trimethyllysine (lysine 14). Positions 123 and 173 each coordinate substrate. The active-site Proton acceptor is lysine 175. Lysine 177 serves as a coordination point for substrate. Mg(2+)-binding residues include lysine 201, aspartate 203, and glutamate 204. At lysine 201 the chain carries N6-carboxylysine. Histidine 294 (proton acceptor) is an active-site residue. Residues arginine 295, histidine 327, and serine 379 each coordinate substrate.

Belongs to the RuBisCO large chain family. Type I subfamily. As to quaternary structure, heterohexadecamer of 8 large chains and 8 small chains; disulfide-linked. The disulfide link is formed within the large subunit homodimers. Requires Mg(2+) as cofactor. The disulfide bond which can form in the large chain dimeric partners within the hexadecamer appears to be associated with oxidative stress and protein turnover.

The protein resides in the plastid. It is found in the chloroplast. It carries out the reaction 2 (2R)-3-phosphoglycerate + 2 H(+) = D-ribulose 1,5-bisphosphate + CO2 + H2O. The catalysed reaction is D-ribulose 1,5-bisphosphate + O2 = 2-phosphoglycolate + (2R)-3-phosphoglycerate + 2 H(+). RuBisCO catalyzes two reactions: the carboxylation of D-ribulose 1,5-bisphosphate, the primary event in carbon dioxide fixation, as well as the oxidative fragmentation of the pentose substrate in the photorespiration process. Both reactions occur simultaneously and in competition at the same active site. The polypeptide is Ribulose bisphosphate carboxylase large chain (Angiopteris evecta (Mule's foot fern)).